A 514-amino-acid chain; its full sequence is ATP synthase subunit alpha (514 aa).

170–177 provides a ligand contact to ATP; the sequence is GDRQIGKT.

The protein belongs to the ATPase alpha/beta chains family. As to quaternary structure, F-type ATPases have 2 components, CF(1) - the catalytic core - and CF(0) - the membrane proton channel. CF(1) has five subunits: alpha(3), beta(3), gamma(1), delta(1), epsilon(1). CF(0) has three main subunits: a(1), b(2) and c(9-12). The alpha and beta chains form an alternating ring which encloses part of the gamma chain. CF(1) is attached to CF(0) by a central stalk formed by the gamma and epsilon chains, while a peripheral stalk is formed by the delta and b chains.

The protein localises to the cell inner membrane. The enzyme catalyses ATP + H2O + 4 H(+)(in) = ADP + phosphate + 5 H(+)(out). Its function is as follows. Produces ATP from ADP in the presence of a proton gradient across the membrane. The alpha chain is a regulatory subunit. The polypeptide is ATP synthase subunit alpha (Pseudomonas putida (strain GB-1)).